We begin with the raw amino-acid sequence, 441 residues long: Lysine histidine transporter-like 2 (441 aa).

At Met-1–Lys-32 the chain is on the cytoplasmic side. The helical transmembrane segment at Trp-33–Pro-53 threads the bilayer. At Tyr-54–Asn-58 the chain is on the extracellular side. A helical membrane pass occupies residues Leu-59 to Leu-79. Over Trp-80 to Gly-110 the chain is Cytoplasmic. The helical transmembrane segment at Leu-111–Val-131 threads the bilayer. Residues Thr-132–Tyr-155 are Extracellular-facing. The next 2 helical transmembrane spans lie at Trp-156–Ile-176 and Ser-177–Thr-197. At Ser-198 to Asn-222 the chain is on the extracellular side. A helical transmembrane segment spans residues Phe-223–Ile-243. Topologically, residues Gln-244–Val-264 are cytoplasmic. A helical membrane pass occupies residues Val-265–Phe-285. The Extracellular segment spans residues Gly-286–Pro-300. Residues Ile-301–Ile-321 form a helical membrane-spanning segment. Residues Tyr-322 to Arg-347 lie on the Cytoplasmic side of the membrane. Residues Phe-348–Gly-370 form a helical membrane-spanning segment. The Extracellular segment spans residues Leu-371–Gly-373. Residues Phe-374–Lys-396 traverse the membrane as a helical segment. Residues Lys-397–Cys-406 lie on the Cytoplasmic side of the membrane. The helical transmembrane segment at Ile-407–Leu-427 threads the bilayer. Residues Arg-428–Ser-441 are Extracellular-facing.

Belongs to the amino acid/polyamine transporter 2 family. Amino acid/auxin permease (AAAP) (TC 2.A.18.2) subfamily.

The protein localises to the cell membrane. Amino acid transporter. The chain is Lysine histidine transporter-like 2 from Arabidopsis thaliana (Mouse-ear cress).